A 389-amino-acid chain; its full sequence is tRNA-specific 2-thiouridylase MnmA (389 aa).

ATP contacts are provided by residues Gly9–Ser16 and Met35. The interval Asn95–Asp97 is interaction with target base in tRNA. Catalysis depends on Cys100, which acts as the Nucleophile. A disulfide bridge links Cys100 with Cys196. An ATP-binding site is contributed by Gly124. The interaction with tRNA stretch occupies residues Lys146–Gln148. The active-site Cysteine persulfide intermediate is Cys196. Residues Arg308 to Tyr309 are interaction with tRNA.

This sequence belongs to the MnmA/TRMU family.

Its subcellular location is the cytoplasm. The catalysed reaction is S-sulfanyl-L-cysteinyl-[protein] + uridine(34) in tRNA + AH2 + ATP = 2-thiouridine(34) in tRNA + L-cysteinyl-[protein] + A + AMP + diphosphate + H(+). Its function is as follows. Catalyzes the 2-thiolation of uridine at the wobble position (U34) of tRNA, leading to the formation of s(2)U34. The chain is tRNA-specific 2-thiouridylase MnmA from Burkholderia ambifaria (strain MC40-6).